We begin with the raw amino-acid sequence, 217 residues long: Response regulator RR06 (217 aa).

Positions 2–115 (NILVADDEEM…LLVKRIKALI (114 aa)) constitute a Response regulatory domain. A 4-aspartylphosphate modification is found at Asp51. Residues 122–217 (EDIWRYQDVT…VKNVGYKISL (96 aa)) constitute a DNA-binding region (ompR/PhoB-type).

In terms of processing, phosphorylated at threonine residues by StkP; threonine phosphorylation enhances RR06 binding to DNA and may also increase expression of CbpA. May be de-phosphorylated by PhpP.

In terms of biological role, member of the two-component regulatory system HK06/RR06 involved in regulation of target genes, including choline-binding protein CbpA. Binds to the promoter region of CbpA and directly activates transcription. The polypeptide is Response regulator RR06 (Streptococcus pneumoniae serotype 2 (strain D39 / NCTC 7466)).